The following is a 227-amino-acid chain: Cytidylate kinase (227 aa).

ATP is bound at residue 7 to 15 (GPSGAGKGT).

This sequence belongs to the cytidylate kinase family. Type 1 subfamily.

The protein resides in the cytoplasm. The enzyme catalyses CMP + ATP = CDP + ADP. It catalyses the reaction dCMP + ATP = dCDP + ADP. This Actinobacillus succinogenes (strain ATCC 55618 / DSM 22257 / CCUG 43843 / 130Z) protein is Cytidylate kinase.